The following is a 510-amino-acid chain: NAD(P)H-quinone oxidoreductase subunit 2, chloroplastic (510 aa).

The next 13 membrane-spanning stretches (helical) occupy residues 24–44 (LLLFHGSFIFPECILIFGLIL), 59–79 (WFYFISSTSLVMSITALLFRW), 99–119 (IFQFLILLCSTLCIPLSVEYI), 124–144 (MAITEFLLFVLTATLGGMFLC), 149–169 (XITIFVAPECFSLCSYLLSGY), 183–203 (YLLMGGASSSILVHGFSWLYG), 229–249 (ISIALISITVGIGFKLSPAPF), 295–315 (WHLLLEILAILSMILGNLIAI), 323–343 (MLAYSSIGQIGYVIIGIIVGD), 347–367 (GYASMITYMLFYISMNLGTFA), 395–415 (ALSSALCLLSLGGLPPLAGFF), 418–438 (LHLFWCGWQAGLYFLVSIGLL), and 484–504 (MTVCVIAXTIPGISMNPILAI).

The protein belongs to the complex I subunit 2 family. In terms of assembly, NDH is composed of at least 16 different subunits, 5 of which are encoded in the nucleus.

It is found in the plastid. It localises to the chloroplast thylakoid membrane. It carries out the reaction a plastoquinone + NADH + (n+1) H(+)(in) = a plastoquinol + NAD(+) + n H(+)(out). It catalyses the reaction a plastoquinone + NADPH + (n+1) H(+)(in) = a plastoquinol + NADP(+) + n H(+)(out). Functionally, NDH shuttles electrons from NAD(P)H:plastoquinone, via FMN and iron-sulfur (Fe-S) centers, to quinones in the photosynthetic chain and possibly in a chloroplast respiratory chain. The immediate electron acceptor for the enzyme in this species is believed to be plastoquinone. Couples the redox reaction to proton translocation, and thus conserves the redox energy in a proton gradient. In Narcissus elegans (Daffodil), this protein is NAD(P)H-quinone oxidoreductase subunit 2, chloroplastic.